Reading from the N-terminus, the 155-residue chain is Fibroblast growth factor 2 (155 aa).

The propeptide occupies 1-9 (MAAGSITTL). The segment at 1–20 (MAAGSITTLPALPEDGGSSA) is disordered. N36 lines the heparin pocket. The short motif at 46 to 48 (DGR) is the Cell attachment site; atypical element. At Y82 the chain carries Phosphotyrosine; by TEC. The Cell attachment site; atypical signature appears at 88–90 (DGR). K95 participates in a covalent cross-link: Glycyl lysine isopeptide (Lys-Gly) (interchain with G-Cter in SUMO1). A heparin-binding region spans residues 128–144 (KRTGQYKLGPKTGPGQK).

Belongs to the heparin-binding growth factors family. In terms of assembly, monomer. Homodimer. Interacts with FGFR1, FGFR2, FGFR3 and FGFR4. Affinity between fibroblast growth factors (FGFs) and their receptors is increased by heparan sulfate glycosaminoglycans that function as coreceptors. Interacts with CSPG4, FGFBP1 and TEC. Found in a complex with FGFBP1, FGF1 and FGF2. Interacts with FGFBP3. Interacts with integrin ITGAV:ITGB3; the interaction is required for FGF2 signaling. Interacts with SNORC (via the extracellular domain). Interacts with glypican GPC3. Post-translationally, phosphorylation at Tyr-82 regulates FGF2 unconventional secretion.

It localises to the secreted. The protein resides in the nucleus. Functionally, acts as a ligand for FGFR1, FGFR2, FGFR3 and FGFR4. Also acts as an integrin ligand which is required for FGF2 signaling. Binds to integrin ITGAV:ITGB3. Plays an important role in the regulation of cell survival, cell division, cell differentiation and cell migration. Functions as a potent mitogen in vitro. Can induce angiogenesis. Mediates phosphorylation of ERK1/2 and thereby promotes retinal lens fiber differentiation. This is Fibroblast growth factor 2 (FGF2) from Ovis aries (Sheep).